Here is a 155-residue protein sequence, read N- to C-terminus: Ribosomal RNA large subunit methyltransferase H (155 aa).

S-adenosyl-L-methionine is bound by residues L72, G103, and 122–127 (LSKLTM).

This sequence belongs to the RNA methyltransferase RlmH family. Homodimer.

The protein resides in the cytoplasm. It catalyses the reaction pseudouridine(1915) in 23S rRNA + S-adenosyl-L-methionine = N(3)-methylpseudouridine(1915) in 23S rRNA + S-adenosyl-L-homocysteine + H(+). In terms of biological role, specifically methylates the pseudouridine at position 1915 (m3Psi1915) in 23S rRNA. This chain is Ribosomal RNA large subunit methyltransferase H, found in Methylobacillus flagellatus (strain ATCC 51484 / DSM 6875 / VKM B-1610 / KT).